We begin with the raw amino-acid sequence, 279 residues long: Phosphatidylglycerol--prolipoprotein diacylglyceryl transferase (279 aa).

A run of 3 helical transmembrane segments spans residues 22–42 (WYGI…QAAL), 52–72 (LIDI…IYFV), and 89–109 (IWHG…SGII). Arginine 137 lines the a 1,2-diacyl-sn-glycero-3-phospho-(1'-sn-glycerol) pocket. The next 2 membrane-spanning stretches (helical) occupy residues 203–223 (LGET…FVEA) and 235–255 (IRVA…FVIY).

The protein belongs to the Lgt family.

The protein localises to the cell membrane. It catalyses the reaction L-cysteinyl-[prolipoprotein] + a 1,2-diacyl-sn-glycero-3-phospho-(1'-sn-glycerol) = an S-1,2-diacyl-sn-glyceryl-L-cysteinyl-[prolipoprotein] + sn-glycerol 1-phosphate + H(+). It functions in the pathway protein modification; lipoprotein biosynthesis (diacylglyceryl transfer). Its function is as follows. Catalyzes the transfer of the diacylglyceryl group from phosphatidylglycerol to the sulfhydryl group of the N-terminal cysteine of a prolipoprotein, the first step in the formation of mature lipoproteins. This Staphylococcus epidermidis (strain ATCC 12228 / FDA PCI 1200) protein is Phosphatidylglycerol--prolipoprotein diacylglyceryl transferase.